The following is a 217-amino-acid chain: MITRAELLDMLASNAPQGFEAQALGLVPIVVETSGRGERSYDIYSRLLKERLVFMVGEVNDQTANLVVAQLLFLESENPDKDISLYINSPGGSVSAGMAIYDTMQFIKPDVSTLCMGLAASMGAFLLASGAKGKRFALPNSRVMIHQPLGGARGQASDIEIQAREILYLKERLNNLLAQHTGQDVERIARDTDRDNFMSSEDAKAYGLIDQVLLKRP.

Residue S121 is the Nucleophile of the active site. Residue H146 is part of the active site.

This sequence belongs to the peptidase S14 family. As to quaternary structure, fourteen ClpP subunits assemble into 2 heptameric rings which stack back to back to give a disk-like structure with a central cavity, resembling the structure of eukaryotic proteasomes.

The protein localises to the cytoplasm. It catalyses the reaction Hydrolysis of proteins to small peptides in the presence of ATP and magnesium. alpha-casein is the usual test substrate. In the absence of ATP, only oligopeptides shorter than five residues are hydrolyzed (such as succinyl-Leu-Tyr-|-NHMec, and Leu-Tyr-Leu-|-Tyr-Trp, in which cleavage of the -Tyr-|-Leu- and -Tyr-|-Trp bonds also occurs).. Its function is as follows. Cleaves peptides in various proteins in a process that requires ATP hydrolysis. Has a chymotrypsin-like activity. Plays a major role in the degradation of misfolded proteins. The sequence is that of ATP-dependent Clp protease proteolytic subunit from Burkholderia cenocepacia (strain HI2424).